A 105-amino-acid chain; its full sequence is Met repressor (105 aa).

The protein belongs to the MetJ family. In terms of assembly, homodimer.

Its subcellular location is the cytoplasm. In terms of biological role, this regulatory protein, when combined with SAM (S-adenosylmethionine) represses the expression of the methionine regulon and of enzymes involved in SAM synthesis. This chain is Met repressor, found in Hamiltonella defensa subsp. Acyrthosiphon pisum (strain 5AT).